Consider the following 332-residue polypeptide: Ribose-phosphate pyrophosphokinase (332 aa).

57-59 (DGE) contributes to the ATP binding site. 2 residues coordinate Mg(2+): His150 and Asp189. Lys213 is an active-site residue. D-ribose 5-phosphate is bound by residues Arg215, Asp239, and 243–247 (DTAGT).

It belongs to the ribose-phosphate pyrophosphokinase family. Class I subfamily. In terms of assembly, homohexamer. Mg(2+) serves as cofactor.

The protein localises to the cytoplasm. It carries out the reaction D-ribose 5-phosphate + ATP = 5-phospho-alpha-D-ribose 1-diphosphate + AMP + H(+). Its pathway is metabolic intermediate biosynthesis; 5-phospho-alpha-D-ribose 1-diphosphate biosynthesis; 5-phospho-alpha-D-ribose 1-diphosphate from D-ribose 5-phosphate (route I): step 1/1. In terms of biological role, involved in the biosynthesis of the central metabolite phospho-alpha-D-ribosyl-1-pyrophosphate (PRPP) via the transfer of pyrophosphoryl group from ATP to 1-hydroxyl of ribose-5-phosphate (Rib-5-P). The polypeptide is Ribose-phosphate pyrophosphokinase (Gloeobacter violaceus (strain ATCC 29082 / PCC 7421)).